The following is a 299-amino-acid chain: GTPase Era (299 aa).

The Era-type G domain occupies 5–175 (RSGFVCFVGR…TDVLAGKLPP (171 aa)). The interval 13–20 (GRPNTGKS) is G1. Residue 13–20 (GRPNTGKS) participates in GTP binding. The segment at 39-43 (QTTRH) is G2. The tract at residues 60–63 (DTPG) is G3. Residues 60 to 64 (DTPGL) and 124 to 127 (TKID) contribute to the GTP site. The segment at 124–127 (TKID) is G4. The segment at 154–156 (VSA) is G5. In terms of domain architecture, KH type-2 spans 206–285 (VRDELPHSLA…YLDLRVKIAK (80 aa)).

Belongs to the TRAFAC class TrmE-Era-EngA-EngB-Septin-like GTPase superfamily. Era GTPase family. Monomer.

It is found in the cell envelope. The protein localises to the secreted. It localises to the cell wall. Exhibits GTPase activity. Binds RNA but is probably not involved in ribosome assembly in mycobacteria. The chain is GTPase Era from Mycobacterium sp. (strain KMS).